Consider the following 76-residue polypeptide: MGGISITQLLIIVAIVVLLFGTKKLRTLGSDLGESVKGFKKAMADDNKEKDAEFKSLSDDSETTAKTEKAKDKEQA.

A helical transmembrane segment spans residues 1 to 21 (MGGISITQLLIIVAIVVLLFG). The tract at residues 45-76 (DDNKEKDAEFKSLSDDSETTAKTEKAKDKEQA) is disordered.

The protein belongs to the TatA/E family. In terms of assembly, the Tat system comprises two distinct complexes: a TatABC complex, containing multiple copies of TatA, TatB and TatC subunits, and a separate TatA complex, containing only TatA subunits. Substrates initially bind to the TatABC complex, which probably triggers association of the separate TatA complex to form the active translocon.

The protein resides in the cell inner membrane. Its function is as follows. Part of the twin-arginine translocation (Tat) system that transports large folded proteins containing a characteristic twin-arginine motif in their signal peptide across membranes. TatA could form the protein-conducting channel of the Tat system. This Pasteurella multocida (strain Pm70) protein is Sec-independent protein translocase protein TatA.